A 385-amino-acid chain; its full sequence is MVKYISILGSTGSIGTSALDVVSAHPEHFKIVGLTANYNIELLEQQIKTFQPRIVSVATKELADTLRTRISTNTKITYGTDGLIAVATHPNSNLVLSSVVGVSGLLPTIEALKAKKDIAIANKETLVAAGHIVTELAKQNGCRLIPVDSEHSAIFQCLNGENNKEIDKLIVTASGGAFRDKTREEMKTLQAKDALKHPNWLMGAKLTIDSATLMNKGFEVMEARWLFDIPYEKINVMIHKESIIHSLVEFIDGSVIAQLGAPDMRMPIQYAFHYPTRLPSSYEKLNLLEIGSLHFEKPDLEKFPCLQYAYECGKIGGITPAVLNAANEIANALFLKNEIAFFDIEKTIYKTVEAHHNVKDPSLDAILEADQWARQYANQLLIKKS.

Residues Thr11, Gly12, Ser13, Ile14, Asn39, and Asn122 each coordinate NADPH. Lys123 contributes to the 1-deoxy-D-xylulose 5-phosphate binding site. Residue Glu124 participates in NADPH binding. Asp148 is a binding site for Mn(2+). 1-deoxy-D-xylulose 5-phosphate-binding residues include Ser149, Glu150, Ser174, and His197. Glu150 lines the Mn(2+) pocket. Gly203 serves as a coordination point for NADPH. 1-deoxy-D-xylulose 5-phosphate contacts are provided by Ser210, Asn215, Lys216, and Glu219. Position 219 (Glu219) interacts with Mn(2+).

Belongs to the DXR family. The cofactor is Mg(2+). Mn(2+) is required as a cofactor.

It carries out the reaction 2-C-methyl-D-erythritol 4-phosphate + NADP(+) = 1-deoxy-D-xylulose 5-phosphate + NADPH + H(+). The protein operates within isoprenoid biosynthesis; isopentenyl diphosphate biosynthesis via DXP pathway; isopentenyl diphosphate from 1-deoxy-D-xylulose 5-phosphate: step 1/6. Its function is as follows. Catalyzes the NADPH-dependent rearrangement and reduction of 1-deoxy-D-xylulose-5-phosphate (DXP) to 2-C-methyl-D-erythritol 4-phosphate (MEP). The sequence is that of 1-deoxy-D-xylulose 5-phosphate reductoisomerase 1 from Bacillus anthracis.